The sequence spans 137 residues: Cellular retinoic acid-binding protein 1 (137 aa).

A Nuclear localization signal motif is present at residues 21–31; sequence KALGVNAMLRK. All-trans-retinoate is bound at residue 132–134; sequence RIY.

The protein belongs to the calycin superfamily. Fatty-acid binding protein (FABP) family.

The protein resides in the cytoplasm. Cytosolic CRABPs may regulate the access of retinoic acid to the nuclear retinoic acid receptors. The chain is Cellular retinoic acid-binding protein 1 (Crabp1) from Mus musculus (Mouse).